We begin with the raw amino-acid sequence, 324 residues long: Beta-ketoacyl-[acyl-carrier-protein] synthase III (324 aa).

Catalysis depends on residues Cys-114 and His-251. The segment at 252–256 (QANLR) is ACP-binding. Asn-281 is a catalytic residue.

This sequence belongs to the thiolase-like superfamily. FabH family. In terms of assembly, homodimer.

It localises to the cytoplasm. The catalysed reaction is malonyl-[ACP] + acetyl-CoA + H(+) = 3-oxobutanoyl-[ACP] + CO2 + CoA. It participates in lipid metabolism; fatty acid biosynthesis. Its function is as follows. Catalyzes the condensation reaction of fatty acid synthesis by the addition to an acyl acceptor of two carbons from malonyl-ACP. Catalyzes the first condensation reaction which initiates fatty acid synthesis and may therefore play a role in governing the total rate of fatty acid production. Possesses both acetoacetyl-ACP synthase and acetyl transacylase activities. Its substrate specificity determines the biosynthesis of branched-chain and/or straight-chain of fatty acids. This is Beta-ketoacyl-[acyl-carrier-protein] synthase III from Dinoroseobacter shibae (strain DSM 16493 / NCIMB 14021 / DFL 12).